Consider the following 493-residue polypeptide: Amidophosphoribosyltransferase (493 aa).

A propeptide spanning residues 1-26 (MIPTQPLTADLDCDLGLERPDRPEEA) is cleaved from the precursor. The Nucleophile role is filled by Cys-27. Positions 27-252 (CGVFALYAPG…PGEMVRITDA (226 aa)) constitute a Glutamine amidotransferase type-2 domain. Cys-268 lines the [4Fe-4S] cluster pocket. Mg(2+) is bound by residues Ser-315, Asp-377, and Asp-378. [4Fe-4S] cluster contacts are provided by Cys-414, Cys-465, and Cys-468.

The protein in the C-terminal section; belongs to the purine/pyrimidine phosphoribosyltransferase family. Requires Mg(2+) as cofactor. [4Fe-4S] cluster serves as cofactor.

It carries out the reaction 5-phospho-beta-D-ribosylamine + L-glutamate + diphosphate = 5-phospho-alpha-D-ribose 1-diphosphate + L-glutamine + H2O. Its pathway is purine metabolism; IMP biosynthesis via de novo pathway; N(1)-(5-phospho-D-ribosyl)glycinamide from 5-phospho-alpha-D-ribose 1-diphosphate: step 1/2. Catalyzes the formation of phosphoribosylamine from phosphoribosylpyrophosphate (PRPP) and glutamine. The protein is Amidophosphoribosyltransferase of Synechococcus elongatus (strain ATCC 33912 / PCC 7942 / FACHB-805) (Anacystis nidulans R2).